A 76-amino-acid chain; its full sequence is Acyl carrier protein (76 aa).

Residues 1–76 enclose the Carrier domain; it reads MSIEERVKKI…SAIDYVQNNQ (76 aa). Residue Ser-36 is modified to O-(pantetheine 4'-phosphoryl)serine.

Belongs to the acyl carrier protein (ACP) family. In terms of processing, 4'-phosphopantetheine is transferred from CoA to a specific serine of apo-ACP by AcpS. This modification is essential for activity because fatty acids are bound in thioester linkage to the sulfhydryl of the prosthetic group.

It localises to the cytoplasm. Its pathway is lipid metabolism; fatty acid biosynthesis. Functionally, carrier of the growing fatty acid chain in fatty acid biosynthesis. This chain is Acyl carrier protein, found in Histophilus somni (strain 129Pt) (Haemophilus somnus).